A 2109-amino-acid chain; its full sequence is General transcription factor 3C polypeptide 1 (2109 aa).

A disordered region spans residues 467-521 (LPEGEDTFLSESDSEEERSSSKRRGRGSQKDTRASANLRPKTQPHHSTPTKGGWK). Residues 469-482 (EGEDTFLSESDSEE) are compositionally biased toward acidic residues. Lysine 529 is covalently cross-linked (Glycyl lysine isopeptide (Lys-Gly) (interchain with G-Cter in SUMO2)). Positions 586 to 609 (MENPKESSSSLKTGRHSSGQDKPH) are disordered. At serine 667 the chain carries Phosphoserine. Residues 718–727 (STANRVKTSQ) are compositionally biased toward polar residues. Residues 718-775 (STANRVKTSQPPVPQGEAEEDSQGKEGPSGSGDSQLSASSRSESGRMKKSDNKMGITP) are disordered. Serine 739 is subject to Phosphoserine. Low complexity predominate over residues 748 to 759 (SGDSQLSASSRS). The segment covering 760-769 (ESGRMKKSDN) has biased composition (basic and acidic residues). Residues lysine 770 and lysine 833 each participate in a glycyl lysine isopeptide (Lys-Gly) (interchain with G-Cter in SUMO2) cross-link. Disordered regions lie at residues 836–857 (SGRA…SEAP) and 1059–1082 (RKNS…ESAM). A phosphoserine mark is found at serine 1062 and serine 1068. Basic and acidic residues predominate over residues 1073 to 1082 (SLQKEQESAM). Lysine 1142 is covalently cross-linked (Glycyl lysine isopeptide (Lys-Gly) (interchain with G-Cter in SUMO2)). Positions 1202-1241 (SLDRNRRVRGGKSQKRKRLKKDPGKKIKRKKKGEFPGEKS) are disordered. A compositionally biased stretch (basic residues) spans 1207–1221 (RRVRGGKSQKRKRLK). Phosphoserine is present on residues serine 1253 and serine 1611. Residues 1608-1631 (KDGSLEDDEDEEDDLDEGVGGKRR) form a disordered region. Acidic residues predominate over residues 1612-1624 (LEDDEDEEDDLDE). Serine 1632 and serine 1653 each carry phosphoserine. Residues 1823–1833 (EDADIQREDPQ) show a composition bias toward basic and acidic residues. Positions 1823–1961 (EDADIQREDP…GSEDPRGFTE (139 aa)) are disordered. A compositionally biased stretch (low complexity) spans 1838 to 1848 (EGSSSEDSPPE). A phosphoserine mark is found at serine 1856, serine 1865, serine 1868, serine 1896, and serine 1911. Residues 1916-1926 (LEDTAAAGAAQ) show a composition bias toward low complexity. Positions 1937–1947 (SPGQEQLSGQA) are enriched in polar residues. Serine 1969 bears the Phosphoserine mark.

Belongs to the TFIIIC subunit 1 family. In terms of assembly, part of the TFIIIC subcomplex TFIIIC2, consisting of six subunits, GTF3C1, GTF3C2, GTF3C3, GTF3C4, GTF3C5 and GTF3C6. Interacts with IGHMBP2. Interacts with MAF1.

It localises to the nucleus. In terms of biological role, required for RNA polymerase III-mediated transcription. Component of TFIIIC that initiates transcription complex assembly on tRNA and is required for transcription of 5S rRNA and other stable nuclear and cytoplasmic RNAs. Binds to the box B promoter element. The chain is General transcription factor 3C polypeptide 1 (GTF3C1) from Homo sapiens (Human).